We begin with the raw amino-acid sequence, 320 residues long: Phosphate acetyltransferase (320 aa).

The protein belongs to the phosphate acetyltransferase and butyryltransferase family.

The protein resides in the cytoplasm. The enzyme catalyses acetyl-CoA + phosphate = acetyl phosphate + CoA. The protein operates within metabolic intermediate biosynthesis; acetyl-CoA biosynthesis; acetyl-CoA from acetate: step 2/2. This is Phosphate acetyltransferase (pta) from Mycoplasma genitalium (strain ATCC 33530 / DSM 19775 / NCTC 10195 / G37) (Mycoplasmoides genitalium).